A 394-amino-acid polypeptide reads, in one-letter code: Phosphatidylinositol 4-phosphate 5-kinase-like protein 1 (394 aa).

Positions 36-393 (DKQSRLGLFE…RLCQWVEAHT (358 aa)) constitute a PIPK domain.

As to quaternary structure, heterodimerizes with other type I phosphatidylinositol 4-phosphate 5-kinase.

Its subcellular location is the cytoplasm. The protein resides in the membrane. It catalyses the reaction a 1,2-diacyl-sn-glycero-3-phospho-(1D-myo-inositol 4-phosphate) + ATP = a 1,2-diacyl-sn-glycero-3-phospho-(1D-myo-inositol-4,5-bisphosphate) + ADP + H(+). Its function is as follows. May act as a scaffold to localize and regulate type I PI(4)P 5-kinases to specific compartments within the cell, where they generate PI(4,5)P2 for actin nucleation, signaling and scaffold protein recruitment and conversion to PI(3,4,5)P3. This chain is Phosphatidylinositol 4-phosphate 5-kinase-like protein 1 (PIP5KL1), found in Homo sapiens (Human).